Here is a 77-residue protein sequence, read N- to C-terminus: Acyl carrier protein (77 aa).

A Carrier domain is found at 1 to 76 (MATFDDVKAV…DVVNYIDNLK (76 aa)). Ser-36 is subject to O-(pantetheine 4'-phosphoryl)serine.

Belongs to the acyl carrier protein (ACP) family. Post-translationally, 4'-phosphopantetheine is transferred from CoA to a specific serine of apo-ACP by AcpS. This modification is essential for activity because fatty acids are bound in thioester linkage to the sulfhydryl of the prosthetic group.

The protein localises to the cytoplasm. Its pathway is lipid metabolism; fatty acid biosynthesis. In terms of biological role, carrier of the growing fatty acid chain in fatty acid biosynthesis. This Campylobacter jejuni subsp. jejuni serotype O:6 (strain 81116 / NCTC 11828) protein is Acyl carrier protein.